The following is a 588-amino-acid chain: Adenine deaminase (588 aa).

The protein belongs to the metallo-dependent hydrolases superfamily. Adenine deaminase family. In terms of assembly, homodimer. Mn(2+) is required as a cofactor.

The enzyme catalyses adenine + H2O + H(+) = hypoxanthine + NH4(+). The sequence is that of Adenine deaminase from Shigella flexneri.